We begin with the raw amino-acid sequence, 304 residues long: Hairy/enhancer-of-split related with YRPW motif protein 1 (304 aa).

The segment at 1–52 (MKRAHPDYSSSDSELDETVEVEKESADENGNLSSALGSMSPTTSSQILARKR) is disordered. Positions 28–47 (ENGNLSSALGSMSPTTSSQI) are enriched in polar residues. The interval 48-117 (LARKRRRGII…GGKGYFDAHA (70 aa)) is transcriptional repression and interaction with NCOR1 and SIN3A. The region spanning 49 to 104 (ARKRRRGIIEKRRRDRINNSLSELRRLVPSAFEKQGSAKLEKAEILQMTVDHLKML) is the bHLH domain. Residues 122–158 (YRSLGFRECLAEVARYLSIIEGLDASDPLRVRLVSHL) form the Orange domain. Positions 191–234 (AHPLLLPQSGHGNTGTSASPTDPHHQGRLAAAHPEAPALRAPPS) are disordered. The segment covering 200–210 (GHGNTGTSASP) has biased composition (polar residues). Positions 218–234 (RLAAAHPEAPALRAPPS) are enriched in low complexity.

The protein belongs to the HEY family. As to quaternary structure, self-associates. Interacts with HES1 and HEYL. Interacts with HDAC1, NCOR1 and SIN3A. Interacts with GATA4 and GATA6. Interacts with CCDC89/BOIP.

The protein resides in the nucleus. Its function is as follows. Transcriptional repressor which binds preferentially to the canonical E box sequence 5'-CACGTG-3'. Downstream effector of Notch signaling required for cardiovascular development. Specifically required for the Notch-induced endocardial epithelial to mesenchymal transition, which is itself criticial for cardiac valve and septum development. May be required in conjunction with HEY2 to specify arterial cell fate or identity. Promotes maintenance of neuronal precursor cells and glial versus neuronal fate specification. Represses transcription by the cardiac transcriptional activators GATA4 and GATA6 and by the neuronal bHLH factors ASCL1/MASH1 and NEUROD4/MATH3. This Canis lupus familiaris (Dog) protein is Hairy/enhancer-of-split related with YRPW motif protein 1 (HEY1).